The chain runs to 278 residues: Nucleotide-binding protein LHK_02029 (278 aa).

8 to 15 provides a ligand contact to ATP; sequence GLAGSGKS. 57-60 is a GTP binding site; the sequence is DTRD.

Belongs to the RapZ-like family.

In terms of biological role, displays ATPase and GTPase activities. The chain is Nucleotide-binding protein LHK_02029 from Laribacter hongkongensis (strain HLHK9).